The primary structure comprises 425 residues: Ribosomal protein uS12 methylthiotransferase RimO (425 aa).

The MTTase N-terminal domain maps to 2–115 (KNFTVITLGC…IIDYIKQFSK (114 aa)). Residues C11, C47, C78, C142, C146, and C149 each coordinate [4Fe-4S] cluster. The 230-residue stretch at 128-357 (VEPPSYRYIK…MARQAVISLE (230 aa)) folds into the Radical SAM core domain. The 66-residue stretch at 360 to 425 (RALIGKKYEA…YEYDVKGVIV (66 aa)) folds into the TRAM domain.

This sequence belongs to the methylthiotransferase family. RimO subfamily. [4Fe-4S] cluster is required as a cofactor.

Its subcellular location is the cytoplasm. It carries out the reaction L-aspartate(89)-[ribosomal protein uS12]-hydrogen + (sulfur carrier)-SH + AH2 + 2 S-adenosyl-L-methionine = 3-methylsulfanyl-L-aspartate(89)-[ribosomal protein uS12]-hydrogen + (sulfur carrier)-H + 5'-deoxyadenosine + L-methionine + A + S-adenosyl-L-homocysteine + 2 H(+). Its function is as follows. Catalyzes the methylthiolation of an aspartic acid residue of ribosomal protein uS12. The polypeptide is Ribosomal protein uS12 methylthiotransferase RimO (Thermodesulfovibrio yellowstonii (strain ATCC 51303 / DSM 11347 / YP87)).